Reading from the N-terminus, the 31-residue chain is Kappa-sparatoxin-Hv1c (31 aa).

Intrachain disulfides connect Cys-2–Cys-16, Cys-9–Cys-21, and Cys-15–Cys-25. Trp-31 is subject to Tryptophan amide.

As to expression, expressed by the venom gland.

It localises to the secreted. Its function is as follows. Blocks transient outward voltage-gated potassium channels in rat ventricular myocytes (thus prolonging action-potential duration) and rat Kv4.2/KCNA4 channels expressed in Xenopus oocytes. Is also a weak blocker of calcium channels in rat cerebellar granule cells. The polypeptide is Kappa-sparatoxin-Hv1c (Heteropoda venatoria (Brown huntsman spider)).